The chain runs to 492 residues: Uridine-cytidine kinase D (492 aa).

A disordered region spans residues 36 to 56 (PLPKNKKDHDQSIESDSSFTR). Position 117-124 (117-124 (GPVGAGKT)) interacts with ATP. The CYTH domain maps to 290–460 (EPVYVCKAKY…PQTFLYLYFK (171 aa)). Residues 468–483 (PNYSKLKPNNTNSKIL) show a composition bias toward low complexity. Positions 468–492 (PNYSKLKPNNTNSKILKNNKDKKNL) are disordered.

This sequence belongs to the uridine kinase family.

The catalysed reaction is uridine + ATP = UMP + ADP + H(+). It carries out the reaction cytidine + ATP = CMP + ADP + H(+). Its pathway is pyrimidine metabolism; CTP biosynthesis via salvage pathway; CTP from cytidine: step 1/3. The protein operates within pyrimidine metabolism; UMP biosynthesis via salvage pathway; UMP from uridine: step 1/1. In terms of biological role, catalyzes the conversion of uridine into uridine monophosphate and cytidine into cytidine monophosphate in the pyrimidine salvage pathway. This is Uridine-cytidine kinase D (udkD) from Dictyostelium discoideum (Social amoeba).